An 86-amino-acid chain; its full sequence is Small ribosomal subunit protein bS16 (86 aa).

The protein belongs to the bacterial ribosomal protein bS16 family.

This is Small ribosomal subunit protein bS16 from Xylella fastidiosa (strain M12).